A 700-amino-acid chain; its full sequence is Myotubularin-related protein 11 (700 aa).

Positions 1-39 (MWWGGRGQSFNIAPQKEEPEMGLSGPKSNPGNRMPEPSS) are disordered. In terms of domain architecture, Myotubularin phosphatase spans 201-644 (LETLEDWETE…PQIRFWKRCY (444 aa)).

Belongs to the protein-tyrosine phosphatase family. Non-receptor class myotubularin subfamily.

The polypeptide is Myotubularin-related protein 11 (Mtmr11) (Mus musculus (Mouse)).